Here is a 102-residue protein sequence, read N- to C-terminus: CRISPR-associated endoribonuclease Cas2 (102 aa).

Position 8 (D8) interacts with Mg(2+).

This sequence belongs to the CRISPR-associated endoribonuclease Cas2 protein family. In terms of assembly, homodimer, forms a heterotetramer with a Cas1 homodimer. The cofactor is Mg(2+).

Functionally, CRISPR (clustered regularly interspaced short palindromic repeat), is an adaptive immune system that provides protection against mobile genetic elements (viruses, transposable elements and conjugative plasmids). CRISPR clusters contain sequences complementary to antecedent mobile elements and target invading nucleic acids. CRISPR clusters are transcribed and processed into CRISPR RNA (crRNA). Functions as a ssRNA-specific endoribonuclease. Involved in the integration of spacer DNA into the CRISPR cassette. This Acidovorax ebreus (strain TPSY) (Diaphorobacter sp. (strain TPSY)) protein is CRISPR-associated endoribonuclease Cas2.